We begin with the raw amino-acid sequence, 364 residues long: MANKTVLFNKHLESNAKMVDFHGWDMPLNYGSQIEEHHAVRQDAGMFDVSHMTVVDVTGTDACAFLRKLLANDVAKLKVPGKALYGGMLDDNAGIIDDLITYYLTDTFYRVVVNSATREKDLAWIAKQSQGFDVTVTERPELAMIAVQGPNAKAKAAAVFSADQNAAIEGMKPFFGKQAGSLFIATTGYTGEVGYEIIVPETEAEALWQALLDQGVKPCGLGARDTLRLEAGMNLYGLDMDETINPLAANMGWTIAWEPTDRDFIGRQALEALRDAGTDKLVGLVMEEKGVLRHDMPVFFTDAAGVEQQGVITSGTFSPTLGYSIAMARVPNSIGDTAEVEMRKKRVAVRVVAPNFVRNGKQAF.

It belongs to the GcvT family. The glycine cleavage system is composed of four proteins: P, T, L and H.

The enzyme catalyses N(6)-[(R)-S(8)-aminomethyldihydrolipoyl]-L-lysyl-[protein] + (6S)-5,6,7,8-tetrahydrofolate = N(6)-[(R)-dihydrolipoyl]-L-lysyl-[protein] + (6R)-5,10-methylene-5,6,7,8-tetrahydrofolate + NH4(+). The glycine cleavage system catalyzes the degradation of glycine. In Shewanella sp. (strain ANA-3), this protein is Aminomethyltransferase.